We begin with the raw amino-acid sequence, 649 residues long: ATP-dependent DNA helicase Q1 (649 aa).

A Helicase ATP-binding domain is found at 100–275 (INVTMAGKEV…QKILCIEKCF (176 aa)). 113 to 120 (MPTGGGKG) serves as a coordination point for ATP. The DEVH box signature appears at 219 to 222 (DEVH). A Helicase C-terminal domain is found at 300-451 (FIEDIVKLIN…EMVSYCQNIS (152 aa)). Zn(2+) is bound by residues Cys453, Cys471, Cys475, and Cys478. 2 positions are modified to N6-acetyllysine: Lys514 and Lys522. Ser597 and Ser602 each carry phosphoserine. Polar residues predominate over residues 597-608 (SFRVESSQTCHS). Residues 597–649 (SFRVESSQTCHSEQGDKKMEEKNSGNFQKKAANMLQQSGSKNTGAKKRKIDDA) form a disordered region. The span at 609-619 (EQGDKKMEEKN) shows a compositional bias: basic and acidic residues. Polar residues predominate over residues 630-639 (MLQQSGSKNT). Ser634 is subject to Phosphoserine. The span at 640–649 (GAKKRKIDDA) shows a compositional bias: basic residues.

This sequence belongs to the helicase family. RecQ subfamily. May form homodimers or higher order oligomers. Interacts with EXO1. Interacts with MLH1. Interacts with PARP1. The cofactor is Mg(2+). Mn(2+) is required as a cofactor. It depends on Zn(2+) as a cofactor.

Its subcellular location is the nucleus. The catalysed reaction is Couples ATP hydrolysis with the unwinding of duplex DNA by translocating in the 3'-5' direction.. It carries out the reaction ATP + H2O = ADP + phosphate + H(+). The enzyme catalyses dATP + H2O = dADP + phosphate + H(+). Its function is as follows. DNA helicase that plays a role in DNA damage repair and genome stability. Exhibits a magnesium- and ATP-dependent DNA-helicase activity that unwinds single- and double-stranded DNA in a 3'-5' direction. Plays a role in restoring regressed replication forks. Required to restart stalled replication forks induced by abortive topoisomerase 1 and 2 lesions. May play a role in the repair of DNA that is damaged by ultraviolet light or other mutagens. In Pongo abelii (Sumatran orangutan), this protein is ATP-dependent DNA helicase Q1 (RECQL).